The sequence spans 379 residues: Dual-specificity RNA methyltransferase RlmN (379 aa).

E95 functions as the Proton acceptor in the catalytic mechanism. The Radical SAM core domain maps to E101–D345. C108 and C350 form a disulfide bridge. 3 residues coordinate [4Fe-4S] cluster: C115, C119, and C122. S-adenosyl-L-methionine contacts are provided by residues G176–E177, S208, S230–H232, and N307. C350 acts as the S-methylcysteine intermediate in catalysis.

It belongs to the radical SAM superfamily. RlmN family. [4Fe-4S] cluster serves as cofactor.

It is found in the cytoplasm. The enzyme catalyses adenosine(2503) in 23S rRNA + 2 reduced [2Fe-2S]-[ferredoxin] + 2 S-adenosyl-L-methionine = 2-methyladenosine(2503) in 23S rRNA + 5'-deoxyadenosine + L-methionine + 2 oxidized [2Fe-2S]-[ferredoxin] + S-adenosyl-L-homocysteine. It carries out the reaction adenosine(37) in tRNA + 2 reduced [2Fe-2S]-[ferredoxin] + 2 S-adenosyl-L-methionine = 2-methyladenosine(37) in tRNA + 5'-deoxyadenosine + L-methionine + 2 oxidized [2Fe-2S]-[ferredoxin] + S-adenosyl-L-homocysteine. In terms of biological role, specifically methylates position 2 of adenine 2503 in 23S rRNA and position 2 of adenine 37 in tRNAs. m2A2503 modification seems to play a crucial role in the proofreading step occurring at the peptidyl transferase center and thus would serve to optimize ribosomal fidelity. The sequence is that of Dual-specificity RNA methyltransferase RlmN from Burkholderia lata (strain ATCC 17760 / DSM 23089 / LMG 22485 / NCIMB 9086 / R18194 / 383).